A 461-amino-acid chain; its full sequence is Cysteine--tRNA ligase (461 aa).

Cysteine 29 contributes to the Zn(2+) binding site. A 'HIGH' region motif is present at residues 31–41; it reads MTVYDFCHIGH. Positions 210, 235, and 239 each coordinate Zn(2+). Residues 267-271 carry the 'KMSKS' region motif; it reads KMSKS. Residue lysine 270 participates in ATP binding.

It belongs to the class-I aminoacyl-tRNA synthetase family. In terms of assembly, monomer. Requires Zn(2+) as cofactor.

Its subcellular location is the cytoplasm. It catalyses the reaction tRNA(Cys) + L-cysteine + ATP = L-cysteinyl-tRNA(Cys) + AMP + diphosphate. This chain is Cysteine--tRNA ligase, found in Ectopseudomonas mendocina (strain ymp) (Pseudomonas mendocina).